We begin with the raw amino-acid sequence, 234 residues long: Zinc transport system ATP-binding protein AdcC (234 aa).

In terms of domain architecture, ABC transporter spans 4–234 (ITVEDLSFYY…HENGQEVGHA (231 aa)). Residue 36–43 (GENGAAKT) participates in ATP binding.

This sequence belongs to the ABC transporter superfamily.

In terms of biological role, part of the ATP-driven transport system AdcABC for zinc. Required for transformability. This Streptococcus pneumoniae (strain ATCC BAA-255 / R6) protein is Zinc transport system ATP-binding protein AdcC (adcC).